The chain runs to 146 residues: Hemoglobin A/D subunit beta (146 aa).

Residues 2 to 146 (HWTSEEKQYI…VAHALALGYH (145 aa)) enclose the Globin domain. Heme b-binding residues include H63 and H92.

Belongs to the globin family. In terms of assembly, hemoglobins A and D are heterotetramers of alpha-1, alpha-2 and two identical beta chains. In terms of tissue distribution, red blood cells.

In terms of biological role, involved in oxygen transport from the lung to the various peripheral tissues. The sequence is that of Hemoglobin A/D subunit beta from Aldabrachelys gigantea (Aldabra giant tortoise).